Reading from the N-terminus, the 598-residue chain is MLSSWQKKFFQTPEHPPAEGIAPPRDDGVPNPEPVTYPDTKYPSDVVNHDAGEMLPNEEAQDGVTQAEAITLTWSKISLGAAYFLMWLLYLVNGFQASITGNLSAYVTSGFESHSLIPVISIVSSVMSAATYMPLAKVLNLWDRSIGFIIMVAFATLGLILSATCHDIGTYCAAQVFYSIGFAGIIFSVDVITADTSTLRDRGLAYAFTSSPYIITAFGGPAAAEHFYDSNWRWAYGCFSIVLPVVALPMFCLLRWNRHKAKKSGLLKDKADSGRTWMESIRHYIIEFDILGVFFLAAGLVLFLLPFSIAGSTEDDWKSASIITMLVIGFVCLLVFALVERFVAPVPFLPWALLASRTVLGACMLDVCYQIAYYCWFNYYTSYLQVVYGTSITTAGYITSIFDVVSGVWLFIVGFLIKKTNRFRWLLFIAVPLYILGVGLMIYFRKPSWSVGYMIMCQIFIAFAGGTMIICQQVAVLAASDHDHAASSLAFLNVFGTMGSAVGSSISGAIWTHTLPGALQRLLPDSVKADWQTIYDSLEEQLSYERGTLIRQAIALAYASTQSKMLIAGTAIMALSLVWMFVIRDIKLTKTQTKGVLF.

The segment at 1–34 is disordered; sequence MLSSWQKKFFQTPEHPPAEGIAPPRDDGVPNPEP. The Cytoplasmic segment spans residues 1 to 76; sequence MLSSWQKKFF…AEAITLTWSK (76 aa). Residues 77–97 traverse the membrane as a helical segment; sequence ISLGAAYFLMWLLYLVNGFQA. Residues 98–115 lie on the Extracellular side of the membrane; it reads SITGNLSAYVTSGFESHS. A glycan (N-linked (GlcNAc...) asparagine) is linked at Asn-102. The helical transmembrane segment at 116-136 threads the bilayer; that stretch reads LIPVISIVSSVMSAATYMPLA. Topologically, residues 137–144 are cytoplasmic; it reads KVLNLWDR. Residues 145–165 form a helical membrane-spanning segment; the sequence is SIGFIIMVAFATLGLILSATC. Over 166–171 the chain is Extracellular; the sequence is HDIGTY. Residues 172–192 traverse the membrane as a helical segment; it reads CAAQVFYSIGFAGIIFSVDVI. Over 193 to 203 the chain is Cytoplasmic; it reads TADTSTLRDRG. A helical membrane pass occupies residues 204 to 224; the sequence is LAYAFTSSPYIITAFGGPAAA. The Extracellular portion of the chain corresponds to 225–233; sequence EHFYDSNWR. Residues 234 to 254 form a helical membrane-spanning segment; the sequence is WAYGCFSIVLPVVALPMFCLL. Residues 255 to 289 lie on the Cytoplasmic side of the membrane; it reads RWNRHKAKKSGLLKDKADSGRTWMESIRHYIIEFD. Residues 290-310 traverse the membrane as a helical segment; that stretch reads ILGVFFLAAGLVLFLLPFSIA. Over 311–318 the chain is Extracellular; the sequence is GSTEDDWK. The helical transmembrane segment at 319–339 threads the bilayer; sequence SASIITMLVIGFVCLLVFALV. Residues 340 to 341 are Cytoplasmic-facing; sequence ER. Residues 342–362 form a helical membrane-spanning segment; it reads FVAPVPFLPWALLASRTVLGA. At 363 to 396 the chain is on the extracellular side; it reads CMLDVCYQIAYYCWFNYYTSYLQVVYGTSITTAG. A helical membrane pass occupies residues 397–417; it reads YITSIFDVVSGVWLFIVGFLI. The Cytoplasmic segment spans residues 418-424; sequence KKTNRFR. The helical transmembrane segment at 425–445 threads the bilayer; sequence WLLFIAVPLYILGVGLMIYFR. Residues 446–450 lie on the Extracellular side of the membrane; it reads KPSWS. Residues 451–471 traverse the membrane as a helical segment; that stretch reads VGYMIMCQIFIAFAGGTMIIC. Residues 472 to 490 are Cytoplasmic-facing; that stretch reads QQVAVLAASDHDHAASSLA. A helical membrane pass occupies residues 491-511; the sequence is FLNVFGTMGSAVGSSISGAIW. Residues 512–562 lie on the Extracellular side of the membrane; sequence THTLPGALQRLLPDSVKADWQTIYDSLEEQLSYERGTLIRQAIALAYASTQ. A helical transmembrane segment spans residues 563–583; sequence SKMLIAGTAIMALSLVWMFVI. At 584–598 the chain is on the cytoplasmic side; that stretch reads RDIKLTKTQTKGVLF.

Belongs to the major facilitator superfamily.

It is found in the cell membrane. Its function is as follows. Major facilitator transporter involved in fusarinine C (FsC) uptake. In contrast to TAFC-mediated iron uptake, FsC-mediated iron uptake via mirD does not play a significant role during infection. The chain is MFS siderochrome iron transporter D from Aspergillus fumigatus (strain ATCC MYA-4609 / CBS 101355 / FGSC A1100 / Af293) (Neosartorya fumigata).